We begin with the raw amino-acid sequence, 355 residues long: Peptide chain release factor 1 (355 aa).

Glutamine 233 is modified (N5-methylglutamine). Positions 280–310 (ERRKKEQKRANNRRGQVGSGDRSERIRTYNF) are disordered.

It belongs to the prokaryotic/mitochondrial release factor family. In terms of processing, methylated by PrmC. Methylation increases the termination efficiency of RF1.

It localises to the cytoplasm. Peptide chain release factor 1 directs the termination of translation in response to the peptide chain termination codons UAG and UAA. This Rickettsia canadensis (strain McKiel) protein is Peptide chain release factor 1.